A 532-amino-acid polypeptide reads, in one-letter code: Phosphoenolpyruvate carboxykinase (ATP) (532 aa).

Substrate-binding residues include Arg-60, Tyr-195, and Lys-201. Residues Lys-201, His-221, and 237–245 (GLSGTGKTT) each bind ATP. Residues Lys-201 and His-221 each contribute to the Mn(2+) site. Asp-258 contributes to the Mn(2+) binding site. Glu-287, Arg-323, and Thr-448 together coordinate ATP. Arg-323 serves as a coordination point for substrate.

The protein belongs to the phosphoenolpyruvate carboxykinase (ATP) family. The cofactor is Mn(2+).

The protein resides in the cytoplasm. It carries out the reaction oxaloacetate + ATP = phosphoenolpyruvate + ADP + CO2. It participates in carbohydrate biosynthesis; gluconeogenesis. In terms of biological role, involved in the gluconeogenesis. Catalyzes the conversion of oxaloacetate (OAA) to phosphoenolpyruvate (PEP) through direct phosphoryl transfer between the nucleoside triphosphate and OAA. This chain is Phosphoenolpyruvate carboxykinase (ATP), found in Christiangramia forsetii (strain DSM 17595 / CGMCC 1.15422 / KT0803) (Gramella forsetii).